The chain runs to 2364 residues: Cytotoxin-L (2364 aa).

The four-helical bundle stretch occupies residues 1 to 91 (MNLVNKAQLQ…EVLELKNNSL (91 aa)). In terms of domain architecture, GT44 spans 96 to 468 (KNLHFIWIGG…APDVRSTINL (373 aa)). The glucosyltransferase region stretch occupies residues 96 to 468 (KNLHFIWIGG…APDVRSTINL (373 aa)). Residues 101–103 (IWI), Asn-139, 265–270 (LAAASD), and 286–288 (DVD) contribute to the UDP-alpha-D-glucose site. Mg(2+) contacts are provided by Asp-288, Glu-515, and Ser-518. Position 518–520 (518–520 (SLW)) interacts with UDP-alpha-D-glucose. Positions 544–799 (GEDDNLDFAQ…KSKYLHELST (256 aa)) are autoprocessing region. Zn(2+)-binding residues include Glu-545 and Asp-546. The region spanning 567 to 774 (LSSMKTRNKE…EESIIKDISS (208 aa)) is the Peptidase C80 domain. The 1D-myo-inositol hexakisphosphate site is built by Tyr-577, Lys-600, and Lys-647. Position 653 (His-653) interacts with Zn(2+). His-653 serves as the catalytic For protease activity. The active-site Nucleophile; for protease activity is Cys-698. His-757 contributes to the Zn(2+) binding site. Lys-764, Lys-775, and Lys-792 together coordinate 1D-myo-inositol hexakisphosphate. A translocation region region spans residues 800-1500 (LLQEIRNNAN…ESIIRNIYMP (701 aa)). 5 interaction with host SEMA6A and SEMA6B regions span residues 1433-1438 (CMKLIE), 1466-1471 (DNETKY), 1484-1495 (FTAEFSNESIIR), 1504-1511 (NLFIYSSK), and 1596-1601 (YNNLDP). Cell wall-binding repeat units follow at residues 1813–1832 (EFGLVSLDNDYFYINSFGNM), 1833–1852 (VSGLIYINDSLYYFKPPKNN), 1854–1873 (ITGFTTIDGNKYYFDPTKSG), 1876–1895 (SIGEITIDGKDYYFNKQGIL), 1926–1945 (FIGKLNIDGKIYYFEDNYRA), 1946–1965 (AVEWKLLDDETYYFNPKTGE), 1967–1986 (LKGLHQIGDNKYYFDDNGIM), 1987–2006 (QTGFITINDKVFYFNNDGVM), 2007–2026 (QVGYIEVNGKYFYFGKNGER), 2057–2076 (YNGILNFNGKIYFFDISNTA), 2077–2097 (VVGWGTLDDGSTYYFDDNTAE), 2099–2118 (CIGLTVINDCKYYFDDNGIR), 2119–2138 (QLGFITINDNIFYFSESGKI), 2139–2158 (ELGYQNINGNYFYIDESGLV), 2209–2224 (ETGWIENETDKYYFDP), 2227–2249 (KKAYKGINVVDDIKYYFDENGIM), 2250–2269 (RTGLISFENNNYYFNEDGKM), 2270–2289 (QFGYLNIKDKMFYFGKDGKM), 2320–2339 (YTGWLDLDGKRYYFTDEYIA), and 2340–2359 (ATGSLTIDGYNYYFDPDTAE). Residues 1835–2364 (GLIYINDSLY…PDTAELVVSE (530 aa)) form a receptor-binding (CROPS) region region.

It belongs to the clostridial glucosylating toxin (LCGT) family. Homomultimer; forms an inactive homomultimer at pH 8, which dissociates at pH 4, leading to cytotoxicity. Interacts with host SEMA6A; interaction promotes toxin entry into host cell. Interacts with host SEMA6B; interaction promotes toxin entry into host cell. Requires Zn(2+) as cofactor. Mn(2+) is required as a cofactor. Mg(2+) serves as cofactor. Undergoes autocatalytic cleavage to release the N-terminal part (Glucosyltransferase TcsL), which constitutes the active part of the toxin, in the host cytosol. 1D-myo-inositol hexakisphosphate-binding (InsP6) activates the peptidase C80 domain and promotes autoprocessing.

It localises to the secreted. Its subcellular location is the host endosome membrane. The protein resides in the host cytoplasm. It is found in the host cytosol. The protein localises to the host cell membrane. The enzyme catalyses L-threonyl-[protein] + UDP-alpha-D-glucose = 3-O-(alpha-D-glucosyl)-L-threonyl-[protein] + UDP + H(+). Protease activity is activated upon binding to 1D-myo-inositol hexakisphosphate (InsP6), which induces conformational reorganization. Functionally, precursor of a cytotoxin that targets the vascular endothelium, inducing an anti-inflammatory effect and resulting in lethal toxic shock syndrome. TcsL constitutes the main toxin that mediates the pathology of P.sordellii infection, an anaerobic Gram-positive bacterium found in soil and in the gastrointestinal and vaginal tracts of animals and humans; although the majority of carriers are asymptomatic, pathogenic P.sordellii infections arise rapidly and are highly lethal. This form constitutes the precursor of the toxin: it enters into host cells and mediates autoprocessing to release the active toxin (Glucosyltransferase TcsL) into the host cytosol. Targets vascular endothelium by binding to the semaphorin proteins SEMA6A and SEMA6B, and enters host cells via clathrin-mediated endocytosis. Once entered into host cells, acidification in the endosome promotes the membrane insertion of the translocation region and formation of a pore, leading to translocation of the GT44 and peptidase C80 domains across the endosomal membrane. This activates the peptidase C80 domain and autocatalytic processing, releasing the N-terminal part (Glucosyltransferase TcsL), which constitutes the active part of the toxin, in the cytosol. Its function is as follows. Active form of the toxin, which is released into the host cytosol following autoprocessing and inactivates small GTPases. Acts by mediating monoglucosylation of small GTPases of the Ras (H-Ras/HRAS, K-Ras/KRAS and N-Ras/NRAS) family in host cells at the conserved threonine residue located in the switch I region ('Thr-37/35'), using UDP-alpha-D-glucose as the sugar donor. Also able to catalyze monoglucosylation of some members of the Rho family (Rac1 and Rap2A), but with less efficiency than with Ras proteins. Monoglucosylation of host small GTPases completely prevents the recognition of the downstream effector, blocking the GTPases in their inactive form and leading to apoptosis. Induces an anti-inflammatory effect, mainly by inactivating Ras proteins which results in blockage of the cell cycle and killing of immune cells. The absence or moderate local inflammatory response allows C.sordellii spreading in deep tissues, production of toxin which is released in the general circulation and causes a toxic shock syndrome. The chain is Cytotoxin-L from Paraclostridium sordellii (strain ATCC 9714 / DSM 2141 / JCM 3814 / LMG 15708 / NCIMB 10717 / 211) (Clostridium sordellii).